A 477-amino-acid chain; its full sequence is Ribulose bisphosphate carboxylase large chain (477 aa).

Residues 1–2 (MS) constitute a propeptide that is removed on maturation. At proline 3 the chain carries N-acetylproline. An N6,N6,N6-trimethyllysine modification is found at lysine 14. Residues asparagine 123 and threonine 173 each coordinate substrate. The active-site Proton acceptor is lysine 175. Lysine 177 lines the substrate pocket. 3 residues coordinate Mg(2+): lysine 201, aspartate 203, and glutamate 204. Lysine 201 carries the N6-carboxylysine modification. The Proton acceptor role is filled by histidine 294. Arginine 295, histidine 327, and serine 379 together coordinate substrate.

It belongs to the RuBisCO large chain family. Type I subfamily. In terms of assembly, heterohexadecamer of 8 large chains and 8 small chains; disulfide-linked. The disulfide link is formed within the large subunit homodimers. Mg(2+) is required as a cofactor. In terms of processing, the disulfide bond which can form in the large chain dimeric partners within the hexadecamer appears to be associated with oxidative stress and protein turnover.

The protein resides in the plastid. It localises to the chloroplast. It carries out the reaction 2 (2R)-3-phosphoglycerate + 2 H(+) = D-ribulose 1,5-bisphosphate + CO2 + H2O. The catalysed reaction is D-ribulose 1,5-bisphosphate + O2 = 2-phosphoglycolate + (2R)-3-phosphoglycerate + 2 H(+). Functionally, ruBisCO catalyzes two reactions: the carboxylation of D-ribulose 1,5-bisphosphate, the primary event in carbon dioxide fixation, as well as the oxidative fragmentation of the pentose substrate in the photorespiration process. Both reactions occur simultaneously and in competition at the same active site. The sequence is that of Ribulose bisphosphate carboxylase large chain from Oryza nivara (Indian wild rice).